We begin with the raw amino-acid sequence, 405 residues long: Probable tRNA sulfurtransferase (405 aa).

A THUMP domain is found at 60 to 165; it reads DKIDQRLKLV…QDAIYISNQL (106 aa). Residues 183-184, 208-209, Arg-265, Gly-287, and Gln-296 contribute to the ATP site; these read ML and HF.

This sequence belongs to the ThiI family.

The protein localises to the cytoplasm. The catalysed reaction is [ThiI sulfur-carrier protein]-S-sulfanyl-L-cysteine + a uridine in tRNA + 2 reduced [2Fe-2S]-[ferredoxin] + ATP + H(+) = [ThiI sulfur-carrier protein]-L-cysteine + a 4-thiouridine in tRNA + 2 oxidized [2Fe-2S]-[ferredoxin] + AMP + diphosphate. It catalyses the reaction [ThiS sulfur-carrier protein]-C-terminal Gly-Gly-AMP + S-sulfanyl-L-cysteinyl-[cysteine desulfurase] + AH2 = [ThiS sulfur-carrier protein]-C-terminal-Gly-aminoethanethioate + L-cysteinyl-[cysteine desulfurase] + A + AMP + 2 H(+). It functions in the pathway cofactor biosynthesis; thiamine diphosphate biosynthesis. Its function is as follows. Catalyzes the ATP-dependent transfer of a sulfur to tRNA to produce 4-thiouridine in position 8 of tRNAs, which functions as a near-UV photosensor. Also catalyzes the transfer of sulfur to the sulfur carrier protein ThiS, forming ThiS-thiocarboxylate. This is a step in the synthesis of thiazole, in the thiamine biosynthesis pathway. The sulfur is donated as persulfide by IscS. This is Probable tRNA sulfurtransferase from Lactobacillus gasseri (strain ATCC 33323 / DSM 20243 / BCRC 14619 / CIP 102991 / JCM 1131 / KCTC 3163 / NCIMB 11718 / NCTC 13722 / AM63).